The chain runs to 1009 residues: Epididymis-specific alpha-mannosidase (1009 aa).

The first 23 residues, 1–23 (MGQLCWLPLLAPLLLLRPPGVQS), serve as a signal peptide directing secretion. Residues H36, D38, and D151 each coordinate Zn(2+). The Nucleophile role is filled by D151. N226, N249, N294, and N336 each carry an N-linked (GlcNAc...) asparagine glycan. H420 is a binding site for Zn(2+). Residues N516, N608, N670, N675, N748, N808, N812, and N890 are each glycosylated (N-linked (GlcNAc...) asparagine). Positions 972 to 991 (GPGRHRGDTTSPSRPPGGPI) are disordered.

Belongs to the glycosyl hydrolase 38 family. Zn(2+) is required as a cofactor.

The protein localises to the secreted. The enzyme catalyses Hydrolysis of terminal, non-reducing alpha-D-mannose residues in alpha-D-mannosides.. The chain is Epididymis-specific alpha-mannosidase (MAN2B2) from Homo sapiens (Human).